A 143-amino-acid polypeptide reads, in one-letter code: MALERTFSIIKPDAVAKNVIGAIYNRFESAGLRIVASKMLHLSKEQAEGFYAEHSERPFFGALVEFMTSGPVMVQVLEGENAVLKNREIMGATNPAEALAGTLRADYAASIDENACHGSDAPESAAREIAYFFSDEEICPRTR.

ATP-binding residues include Lys-11, Phe-59, Arg-87, Thr-93, Arg-104, and Asn-114. His-117 (pros-phosphohistidine intermediate) is an active-site residue.

Belongs to the NDK family. In terms of assembly, homotetramer. Requires Mg(2+) as cofactor.

It localises to the cytoplasm. It catalyses the reaction a 2'-deoxyribonucleoside 5'-diphosphate + ATP = a 2'-deoxyribonucleoside 5'-triphosphate + ADP. It carries out the reaction a ribonucleoside 5'-diphosphate + ATP = a ribonucleoside 5'-triphosphate + ADP. In terms of biological role, major role in the synthesis of nucleoside triphosphates other than ATP. The ATP gamma phosphate is transferred to the NDP beta phosphate via a ping-pong mechanism, using a phosphorylated active-site intermediate. The sequence is that of Nucleoside diphosphate kinase from Pseudoalteromonas atlantica (strain T6c / ATCC BAA-1087).